The sequence spans 1040 residues: Alpha-mannosidase 2C1 (1040 aa).

Positions 260, 262, 372, and 577 each coordinate Co(2+). Asp372 functions as the Nucleophile in the catalytic mechanism.

This sequence belongs to the glycosyl hydrolase 38 family. Co(2+) is required as a cofactor.

The protein resides in the cytoplasm. It catalyses the reaction Hydrolysis of terminal, non-reducing alpha-D-mannose residues in alpha-D-mannosides.. Strongly inhibited by swainsonine. Also inhibited to a lesser extent by deoxymannojirimycin (DMM). Its function is as follows. Cleaves alpha 1,2-, alpha 1,3-, and alpha 1,6-linked mannose residues on cytoplasmic free oligosaccharides generated by N-glycoprotein degradation pathways. The polypeptide is Alpha-mannosidase 2C1 (MAN2C1) (Homo sapiens (Human)).